The following is a 338-amino-acid chain: Phenylalanine--tRNA ligase alpha subunit (338 aa).

Mg(2+) is bound at residue glutamate 253.

The protein belongs to the class-II aminoacyl-tRNA synthetase family. Phe-tRNA synthetase alpha subunit type 1 subfamily. As to quaternary structure, tetramer of two alpha and two beta subunits. Mg(2+) is required as a cofactor.

The protein localises to the cytoplasm. It carries out the reaction tRNA(Phe) + L-phenylalanine + ATP = L-phenylalanyl-tRNA(Phe) + AMP + diphosphate + H(+). This Gloeobacter violaceus (strain ATCC 29082 / PCC 7421) protein is Phenylalanine--tRNA ligase alpha subunit.